We begin with the raw amino-acid sequence, 339 residues long: Aspartate carbamoyltransferase catalytic subunit (339 aa).

Residues Arg-59 and Thr-60 each coordinate carbamoyl phosphate. An L-aspartate-binding site is contributed by Lys-87. 3 residues coordinate carbamoyl phosphate: Arg-109, His-142, and Gln-145. 2 residues coordinate L-aspartate: Arg-182 and Arg-253. 2 residues coordinate carbamoyl phosphate: Gly-294 and Pro-295.

This sequence belongs to the aspartate/ornithine carbamoyltransferase superfamily. ATCase family. Heterododecamer (2C3:3R2) of six catalytic PyrB chains organized as two trimers (C3), and six regulatory PyrI chains organized as three dimers (R2).

The enzyme catalyses carbamoyl phosphate + L-aspartate = N-carbamoyl-L-aspartate + phosphate + H(+). Its pathway is pyrimidine metabolism; UMP biosynthesis via de novo pathway; (S)-dihydroorotate from bicarbonate: step 2/3. In terms of biological role, catalyzes the condensation of carbamoyl phosphate and aspartate to form carbamoyl aspartate and inorganic phosphate, the committed step in the de novo pyrimidine nucleotide biosynthesis pathway. This is Aspartate carbamoyltransferase catalytic subunit from Prochlorococcus marinus (strain NATL2A).